Here is a 299-residue protein sequence, read N- to C-terminus: Nucleotide-binding protein Moth_0258 (299 aa).

Residue 14-21 coordinates ATP; it reads GLSGAGKT. 68–71 contacts GTP; the sequence is DIRG.

The protein belongs to the RapZ-like family.

In terms of biological role, displays ATPase and GTPase activities. In Moorella thermoacetica (strain ATCC 39073 / JCM 9320), this protein is Nucleotide-binding protein Moth_0258.